The sequence spans 156 residues: Cellulose synthase operon protein D (156 aa).

Its pathway is glycan metabolism; bacterial cellulose biosynthesis. Functionally, may have a major role in the perfection of crystallization, involved either in the pore structure itself or in the organization of the pores within the linear array of terminal synthesizing complexes (TCs). The polypeptide is Cellulose synthase operon protein D (Komagataeibacter sucrofermentans (strain ATCC 700178 / DSM 15973 / CECT 7291 / JCM 9730 / LMG 18788 / BPR 2001) (Acetobacter xylinus subsp. sucrofermentans)).